Consider the following 179-residue polypeptide: Small ribosomal subunit protein uS7 (179 aa).

It belongs to the universal ribosomal protein uS7 family. In terms of assembly, part of the 30S ribosomal subunit. Contacts proteins S9 and S11. Cross-links to IF3 and the P and E site tRNAs.

One of the primary rRNA binding proteins, it binds directly to 16S rRNA where it nucleates assembly of the head domain of the 30S subunit. Is located at the subunit interface close to the decoding center, where it has been shown to contact mRNA. Has been shown to contact tRNA in both the P and E sites; it probably blocks exit of the E site tRNA. Functionally, protein S7 is also a translational repressor protein; it regulates the expression of the str operon members to different degrees by binding to its mRNA. This chain is Small ribosomal subunit protein uS7 (rpsG), found in Escherichia coli (strain K12).